The primary structure comprises 1323 residues: Nck-associated protein 5-like (1323 aa).

6 disordered regions span residues 1–22 (MDQPAGGTGKLRASAGEDDSME), 113–142 (QIPLTPLQPPSERPTSPAPNVSEGPATSLP), 156–175 (QQLRPGGPGPPATPPPALDA), 204–238 (PATPWRPTGQGPGSPEPINGEPCGPPQPEPSPWAP), 260–314 (PGEE…DTLL), and 341–714 (GATG…EQPE). The segment at 1–135 (MDQPAGGTGK…PTSPAPNVSE (135 aa)) is mediates interaction with CDK5RAP2 and is required for homodimerization and microtubule bundle formation. Residues 22-109 (ELSTCQELLH…LQQKLQLTAN (88 aa)) are a coiled coil. Composition is skewed to pro residues over residues 162–172 (GPGPPATPPPA) and 226–236 (CGPPQPEPSPW). Positions 271–298 (ASSRAPPSAQGPSSGPHCAPGSSSSSSS) are enriched in low complexity. Residues 353-364 (PGKPNSPDPGPP) show a composition bias toward pro residues. Residues Ser-436, Ser-447, Ser-466, and Ser-473 each carry the phosphoserine; by CDK1 modification. Residues 480 to 483 (SRIP) carry the (S/T)X(I/L)P motif 1 motif. Phosphoserine occurs at positions 489, 492, and 494. Over residues 531–542 (LRPSQSTVSTAL) the composition is skewed to polar residues. Ser-573 bears the Phosphoserine; by CDK1 mark. The span at 647–660 (RPGDPSHTPLRDRL) shows a compositional bias: basic and acidic residues. Thr-654 is modified (phosphothreonine). A mediates interaction with beta-tubulin and is required for microtubule bundle formation region spans residues 743–1136 (RVYSSHSMGA…SGTPSKNLPK (394 aa)). A Phosphoserine; by CDK1 modification is found at Ser-760. Disordered regions lie at residues 778–875 (ALCP…HSAI), 892–948 (GQER…EVKT), 979–1003 (AYLSRARPRPGGPATVPSPGLGQAQ), and 1027–1323 (KELP…GSQG). The span at 799–817 (KPKSPHSSPTKLPSKSPTK) shows a compositional bias: low complexity. A (S/T)X(I/L)P motif 2 motif is present at residues 808–811 (TKLP). Positions 918–921 (SKLP) match the (S/T)X(I/L)P motif 3; required for interaction with MAPRE1 motif. Over residues 925–934 (RRTEATKNKD) the composition is skewed to basic and acidic residues. Positions 942–985 (LRKEVKTEARKLEAESLNISKLMAKAEDLRRALEEEKAYLSRAR) form a coiled coil. Over residues 1027-1041 (KELPPKSWREPKPEY) the composition is skewed to basic and acidic residues. 2 stretches are compositionally biased toward polar residues: residues 1097–1112 (VSTTHFTACGSLTRTL) and 1124–1136 (HSSSGTPSKNLPK). Pro residues predominate over residues 1143–1153 (DPPPGAPPARP). Ser-1184 is subject to Phosphoserine. Composition is skewed to polar residues over residues 1225–1237 (TFPNTRTAGSSSD) and 1264–1273 (VDPSRTSTPQ). The segment covering 1302-1323 (LETSESLSDSLYDSLSSCGSQG) has biased composition (low complexity).

Homodimer. Interacts with CDK5RAP2. Interacts with MAPRE1. Interacts with beta-tubulin. Post-translationally, CDK1/Cyclin B-dependent phosphorylation mediates its dissociation from centrosomes during mitosis.

It is found in the cytoplasm. The protein resides in the cytoskeleton. The protein localises to the microtubule organizing center. It localises to the centrosome. Functionally, regulates microtubule organization and stabilization. Promotes microtubule growth and bundling formation and stabilizes microtubules by increasing intense acetylation of microtubules. Both tubulin-binding and homodimer formation are required for NCKAP5L-mediated microtubule bundle formation. The sequence is that of Nck-associated protein 5-like (Nckap5l) from Mus musculus (Mouse).